The chain runs to 165 residues: NAD(P)H-quinone oxidoreductase subunit J, chloroplastic (165 aa).

It belongs to the complex I 30 kDa subunit family. NDH is composed of at least 16 different subunits, 5 of which are encoded in the nucleus.

Its subcellular location is the plastid. The protein localises to the chloroplast thylakoid membrane. It carries out the reaction a plastoquinone + NADH + (n+1) H(+)(in) = a plastoquinol + NAD(+) + n H(+)(out). The catalysed reaction is a plastoquinone + NADPH + (n+1) H(+)(in) = a plastoquinol + NADP(+) + n H(+)(out). Functionally, NDH shuttles electrons from NAD(P)H:plastoquinone, via FMN and iron-sulfur (Fe-S) centers, to quinones in the photosynthetic chain and possibly in a chloroplast respiratory chain. The immediate electron acceptor for the enzyme in this species is believed to be plastoquinone. Couples the redox reaction to proton translocation, and thus conserves the redox energy in a proton gradient. This chain is NAD(P)H-quinone oxidoreductase subunit J, chloroplastic, found in Ipomoea purpurea (Common morning glory).